The following is a 420-amino-acid chain: UDP-N-acetylglucosamine 1-carboxyvinyltransferase (420 aa).

22 to 23 provides a ligand contact to phosphoenolpyruvate; it reads KN. Arg-92 contacts UDP-N-acetyl-alpha-D-glucosamine. The active-site Proton donor is Cys-116. Cys-116 bears the 2-(S-cysteinyl)pyruvic acid O-phosphothioketal mark. Residues 121-125, Asp-307, and Leu-329 each bind UDP-N-acetyl-alpha-D-glucosamine; that span reads RPIDL.

It belongs to the EPSP synthase family. MurA subfamily.

The protein localises to the cytoplasm. The enzyme catalyses phosphoenolpyruvate + UDP-N-acetyl-alpha-D-glucosamine = UDP-N-acetyl-3-O-(1-carboxyvinyl)-alpha-D-glucosamine + phosphate. The protein operates within cell wall biogenesis; peptidoglycan biosynthesis. Its function is as follows. Cell wall formation. Adds enolpyruvyl to UDP-N-acetylglucosamine. This chain is UDP-N-acetylglucosamine 1-carboxyvinyltransferase, found in Nitratiruptor sp. (strain SB155-2).